The following is a 625-amino-acid chain: MVSLSLRGARRTAKDAASLPFLSWTLSLLALNPLLVSAKSAADYYVRSLPGAPEGPLLKMHAGHIEVDPENHGNLFFWHFQNRHIANRQRTVIWLNGGPGCSSMDGALMEVGPYRLKDNSTLEYNEGSWDEFGNLLFVDQPVGTGFSYVNGNQYLHEMDEMAAHFITFLENWFDIFPEYERDDIYIAGESFAGQHIPYIAKAIQERNEKAQMKPKWSLRGLLIGNGWISPKDQYPSYLTFAYEEGLITKDSRTAKNLEVLQSVCESRLEAGKNKIHLDDCEKVLSEMLTKTMDVSKNECINSYDIRLRDEAPACGMNWPPELTHMNYYLRQPELISALNINPEKKSGWMECSNAVSSTFRTQKSVPSVQLLPGLIESGIPILLFSGDKDLICNHVGTEELINNMKWNGGTGFETSPGVWAPRHDWTFEGEPAGIYQYARNLTYVLFYNASHMVPYDLPRQSRDMLDRFMQVDIASIGGSPADSRIDGEKLPQTSVGGHPNSTAAEEQEKKKMKEAEWKAYAKSGEAVLVVVIIGVIVWGFFIWRSRRHHRGYRSVYNKNMSGSSVLERFHSKRSGADMEAGDFDEAELDDLHSPGLDREHYAVGDDSDDEQQHQRQGSRPEGGQS.

The N-terminal stretch at 1–38 is a signal peptide; that stretch reads MVSLSLRGARRTAKDAASLPFLSWTLSLLALNPLLVSA. The Lumenal segment spans residues 39-522; sequence KSAADYYVRS…KEAEWKAYAK (484 aa). N-linked (GlcNAc...) asparagine glycosylation is present at Asn-119. Residues Ser-190 and Asp-389 contribute to the active site. Asn-440 and Asn-448 each carry an N-linked (GlcNAc...) asparagine glycan. His-451 is a catalytic residue. The tract at residues 479–510 is disordered; sequence SPADSRIDGEKLPQTSVGGHPNSTAAEEQEKK. The segment covering 491–502 has biased composition (polar residues); it reads PQTSVGGHPNST. Asn-500 carries an N-linked (GlcNAc...) asparagine glycan. The chain crosses the membrane as a helical span at residues 523-543; that stretch reads SGEAVLVVVIIGVIVWGFFIW. The Cytoplasmic portion of the chain corresponds to 544 to 625; that stretch reads RSRRHHRGYR…QGSRPEGGQS (82 aa). The interval 588 to 625 is disordered; the sequence is LDDLHSPGLDREHYAVGDDSDDEQQHQRQGSRPEGGQS. Over residues 589 to 603 the composition is skewed to basic and acidic residues; that stretch reads DDLHSPGLDREHYAV.

The protein belongs to the peptidase S10 family.

The protein localises to the golgi apparatus. It is found in the trans-Golgi network membrane. It carries out the reaction Preferential release of a C-terminal arginine or lysine residue.. In terms of biological role, protease with a carboxypeptidase B-like function involved in the C-terminal processing of the lysine and arginine residues from protein precursors. Promotes cell fusion and is involved in the programmed cell death. The chain is Pheromone-processing carboxypeptidase kex1 (kex1) from Aspergillus terreus (strain NIH 2624 / FGSC A1156).